Reading from the N-terminus, the 79-residue chain is MSDIEARVRKIVAEKLNVDEEKVTNTSTFVDELGADSLDTVELVMALEDEFQCEIGDEAAEKMTSVQHAIDYIKSNAKC.

The 76-residue stretch at Ser2–Ala77 folds into the Carrier domain. Ser37 is subject to O-(pantetheine 4'-phosphoryl)serine.

This sequence belongs to the acyl carrier protein (ACP) family. 4'-phosphopantetheine is transferred from CoA to a specific serine of apo-ACP by AcpS. This modification is essential for activity because fatty acids are bound in thioester linkage to the sulfhydryl of the prosthetic group.

Its subcellular location is the cytoplasm. It participates in lipid metabolism; fatty acid biosynthesis. Functionally, carrier of the growing fatty acid chain in fatty acid biosynthesis. The protein is Acyl carrier protein of Xylella fastidiosa (strain M23).